The primary structure comprises 351 residues: Palmitoyltransferase spe-10 (351 aa).

Transmembrane regions (helical) follow at residues 21-43 (TGWILTRCLNVLLFIQLILLWWS), 60-80 (IQATIYLIVGSFLFVMSMWSL), 198-218 (YFLLYIIYTSFLVYWYLLTSL), and 241-261 (LFSFIVGGVFGYYPLGELIIF). In terms of domain architecture, DHHC spans 154-204 (KYCYECGHIKPDRARHCSSCGKCCIKYDHHCPWINMCVTHVNYKYFLLYII).

It belongs to the DHHC palmitoyltransferase family. In terms of tissue distribution, expressed during spermatogenesis in budding and budded spermatids.

The protein resides in the membrane. It carries out the reaction L-cysteinyl-[protein] + hexadecanoyl-CoA = S-hexadecanoyl-L-cysteinyl-[protein] + CoA. Its function is as follows. Involved in spermatogenesis, specifically in the morphogenesis of fibrous body-membranous organelles (FB-MO), which are Golgi-derived organelles used for transporting sperm-specific components, in spermatocytes and in their localization into budding spermatids. Required for the proper formation of spermatids and spermatozoa. This Caenorhabditis elegans protein is Palmitoyltransferase spe-10.